Consider the following 218-residue polypeptide: Large ribosomal subunit protein uL1 (218 aa).

It belongs to the universal ribosomal protein uL1 family. Part of the 50S ribosomal subunit.

Its function is as follows. Binds directly to 23S rRNA. Probably involved in E site tRNA release. Functionally, protein L1 is also a translational repressor protein, it controls the translation of its operon by binding to its mRNA. This is Large ribosomal subunit protein uL1 from Metallosphaera sedula (strain ATCC 51363 / DSM 5348 / JCM 9185 / NBRC 15509 / TH2).